The chain runs to 101 residues: Small ribosomal subunit protein uS14 (101 aa).

It belongs to the universal ribosomal protein uS14 family. In terms of assembly, part of the 30S ribosomal subunit. Contacts proteins S3 and S10.

In terms of biological role, binds 16S rRNA, required for the assembly of 30S particles and may also be responsible for determining the conformation of the 16S rRNA at the A site. This Blochmanniella floridana protein is Small ribosomal subunit protein uS14.